A 310-amino-acid chain; its full sequence is Ribosomal RNA small subunit methyltransferase H (310 aa).

S-adenosyl-L-methionine contacts are provided by residues 35-37 (GGH), Asp52, Phe79, Asp100, and Gln107.

Belongs to the methyltransferase superfamily. RsmH family.

The protein resides in the cytoplasm. The catalysed reaction is cytidine(1402) in 16S rRNA + S-adenosyl-L-methionine = N(4)-methylcytidine(1402) in 16S rRNA + S-adenosyl-L-homocysteine + H(+). Its function is as follows. Specifically methylates the N4 position of cytidine in position 1402 (C1402) of 16S rRNA. The chain is Ribosomal RNA small subunit methyltransferase H from Anaeromyxobacter sp. (strain K).